The sequence spans 276 residues: 4-hydroxy-tetrahydrodipicolinate reductase (276 aa).

NAD(+) is bound by residues 10-15 (GALGKM), Asp-36, and 109-111 (GTT). His-165 serves as the catalytic Proton donor/acceptor. His-166 contacts (S)-2,3,4,5-tetrahydrodipicolinate. Lys-169 acts as the Proton donor in catalysis. 175–176 (GT) provides a ligand contact to (S)-2,3,4,5-tetrahydrodipicolinate.

It belongs to the DapB family.

Its subcellular location is the cytoplasm. It catalyses the reaction (S)-2,3,4,5-tetrahydrodipicolinate + NAD(+) + H2O = (2S,4S)-4-hydroxy-2,3,4,5-tetrahydrodipicolinate + NADH + H(+). The catalysed reaction is (S)-2,3,4,5-tetrahydrodipicolinate + NADP(+) + H2O = (2S,4S)-4-hydroxy-2,3,4,5-tetrahydrodipicolinate + NADPH + H(+). Its pathway is amino-acid biosynthesis; L-lysine biosynthesis via DAP pathway; (S)-tetrahydrodipicolinate from L-aspartate: step 4/4. In terms of biological role, catalyzes the conversion of 4-hydroxy-tetrahydrodipicolinate (HTPA) to tetrahydrodipicolinate. The polypeptide is 4-hydroxy-tetrahydrodipicolinate reductase (Prochlorococcus marinus (strain SARG / CCMP1375 / SS120)).